The sequence spans 228 residues: Sodium channel regulatory subunit beta-4 (228 aa).

An N-terminal signal peptide occupies residues 1 to 30 (MPGARDQGAARARWLGIGLLGLFLLPVSLS). An Ig-like C2-type domain is found at 31 to 148 (LEVSVGKATT…NDFQHQATIF (118 aa)). Over 31–162 (LEVSVGKATT…DKLEEVDNTV (132 aa)) the chain is Extracellular. 3 N-linked (GlcNAc...) asparagine glycosylation sites follow: Asn45, Asn71, and Asn113. The cysteines at positions 53 and 131 are disulfide-linked. A helical membrane pass occupies residues 163-183 (TLIILGVVGGVIGLLIFILLV). At 184–228 (KKFIAFIIKKTQEKKKECLVSSSGNDNTENGLPGSKAEEKAPTKV) the chain is on the cytoplasmic side. Residues 198 to 228 (KKECLVSSSGNDNTENGLPGSKAEEKAPTKV) are disordered. Polar residues predominate over residues 203-213 (VSSSGNDNTEN). Over residues 219–228 (KAEEKAPTKV) the composition is skewed to basic and acidic residues.

Belongs to the sodium channel auxiliary subunit SCN4B (TC 8.A.17) family. As to quaternary structure, a voltage-gated sodium (Nav) channel consists of an ion-conducting pore-forming alpha subunit functional on its own that is regulated by one or more beta subunits. The beta subunit SCN4B is disulfide-linked to the pore-forming alpha subunit. Interacts with SCN1A; regulatory subunit of SCN1A/Nav1.1. Interacts with SCN2A; regulatory subunit of SCN2A/Nav1.2. Post-translationally, contains an interchain disulfide bond with SCN2A.

The protein resides in the cell membrane. Regulatory subunit of multiple voltage-gated sodium (Nav) channels directly mediating the depolarization of excitable membranes. Navs, also called VGSCs (voltage-gated sodium channels) or VDSCs (voltage-dependent sodium channels), operate by switching between closed and open conformations depending on the voltage difference across the membrane. In the open conformation they allow Na(+) ions to selectively pass through the pore, along their electrochemical gradient. The influx of Na+ ions provokes membrane depolarization, initiating the propagation of electrical signals throughout cells and tissues. The accessory beta subunits participate in localization and functional modulation of the Nav channels. Modulates the activity of SCN1A/Nav1.1. Modulates the activity of SCN2A/Nav1.2. In Bos taurus (Bovine), this protein is Sodium channel regulatory subunit beta-4.